The primary structure comprises 795 residues: Phenylalanine--tRNA ligase beta subunit (795 aa).

A tRNA-binding domain is found at 39–148 (AGSFNGVVVG…ADAPLGTDIR (110 aa)). The region spanning 401–476 (PKRATITLRR…RVYGYNNIPD (76 aa)) is the B5 domain. Positions 454, 460, 463, and 464 each coordinate Mg(2+). The 94-residue stretch at 701–794 (SRFPANRRDI…LKERFQASLR (94 aa)) folds into the FDX-ACB domain.

It belongs to the phenylalanyl-tRNA synthetase beta subunit family. Type 1 subfamily. In terms of assembly, tetramer of two alpha and two beta subunits. Mg(2+) is required as a cofactor.

The protein resides in the cytoplasm. The enzyme catalyses tRNA(Phe) + L-phenylalanine + ATP = L-phenylalanyl-tRNA(Phe) + AMP + diphosphate + H(+). The sequence is that of Phenylalanine--tRNA ligase beta subunit from Salmonella choleraesuis (strain SC-B67).